The chain runs to 1744 residues: Tanabin (1744 aa).

Residues 1 to 12 are head; that stretch reads MEGYLASVSLGE. A coil 1A region spans residues 8 to 48; that stretch reads VSLGEESTQMWSLNKRLEAYLSRVKALEEENELLRKEIHSL. The IF rod domain maps to 13–320; that stretch reads ESTQMWSLNK…SLLEAESTRI (308 aa). Residues 49–60 are linker 1; sequence RSSKSERCWKKK. Residues 61 to 156 are coil 1B; that stretch reads HHEEMMKLRD…RDHEEEKALM (96 aa). Residues 157 to 179 are linker 12; the sequence is EEEIASFSQRLENFRVAPVAFKP. A coil 2A region spans residues 180-193; sequence VEVDDYARKLSEIW. A linker 2 region spans residues 194-199; sequence QGAVEE. Positions 200–314 are coil 2B; sequence YKSEVSVLEA…EVATYRSLLE (115 aa). The tract at residues 315 to 1744 is tail; the sequence is AESTRIYTDY…KKALRWKRMF (1430 aa). Basic and acidic residues-rich tracts occupy residues 341–371 and 785–815; these read RRRQSEDTRKTVSKDHRQSYSKKQIGDKNEL and HSHHEETKTSESIAVEHNRMESEHAEVDKSS. Disordered regions lie at residues 341–372, 785–816, 976–996, 1032–1093, 1340–1470, 1485–1506, and 1560–1722; these read RRRQSEDTRKTVSKDHRQSYSKKQIGDKNELQ, HSHHEETKTSESIAVEHNRMESEHAEVDKSSE, EENQLSENEGNQNFGGNDIEE, SMED…QQED, DSDL…FGDV, SGLAQEPSYLGDNEESEDSMEN, and AREK…LNGH. Positions 980 to 990 are enriched in polar residues; the sequence is LSENEGNQNFG. The segment covering 1034 to 1056 has biased composition (acidic residues); it reads EDEEEQNNPETEDNIGLEQESDQ. Over residues 1074-1086 the composition is skewed to basic and acidic residues; the sequence is VVFKPEDMSDKSE. The span at 1340–1351 shows a compositional bias: acidic residues; sequence DSDLESTEEQVQ. The segment covering 1352–1367 has biased composition (basic and acidic residues); that stretch reads ETERIPFKPEDSKMEN. Residues 1368-1377 show a composition bias toward acidic residues; it reads ENSESEESVD. The segment covering 1386 to 1398 has biased composition (basic and acidic residues); sequence HKSEEFEISKDYQ. Positions 1412-1421 are enriched in acidic residues; it reads LEDEFEDLTE. The span at 1423–1432 shows a compositional bias: basic and acidic residues; sequence PDVHEEHQNN. The span at 1433–1442 shows a compositional bias: polar residues; sequence DDSGASTFIT. Residues 1445 to 1460 are compositionally biased toward basic and acidic residues; that stretch reads DEDKEREVRESVSKDE. The segment covering 1496-1505 has biased composition (acidic residues); the sequence is DNEESEDSME. 3 stretches are compositionally biased toward polar residues: residues 1576–1586, 1597–1621, and 1629–1639; these read EFTNENQSASP, EDSVISDNEGTTSSYEDLPNATSIS, and SNISTTEQSST. Positions 1680 to 1691 are enriched in acidic residues; sequence RSEDEELDDEGS. Residues 1698-1709 show a composition bias toward basic and acidic residues; that stretch reads NDEKANGEHKDV.

It belongs to the intermediate filament family. As to expression, growth cones of embryonic vertebrate neurons.

The polypeptide is Tanabin (Xenopus laevis (African clawed frog)).